The sequence spans 98 residues: MSPIFMNITLAFTISLLGMLVYRSHLMASLLCLEGMMMSLFIMIALMASNAHSPLTNIMPIILLVFAACETAVGLALLVSISNTYGLDYIHNLNLLQC.

3 helical membrane passes run 1 to 21 (MSPI…GMLV), 26 to 46 (LMAS…MIAL), and 61 to 81 (IILL…LVSI).

Belongs to the complex I subunit 4L family. As to quaternary structure, core subunit of respiratory chain NADH dehydrogenase (Complex I) which is composed of 45 different subunits.

The protein localises to the mitochondrion inner membrane. It carries out the reaction a ubiquinone + NADH + 5 H(+)(in) = a ubiquinol + NAD(+) + 4 H(+)(out). Core subunit of the mitochondrial membrane respiratory chain NADH dehydrogenase (Complex I) which catalyzes electron transfer from NADH through the respiratory chain, using ubiquinone as an electron acceptor. Part of the enzyme membrane arm which is embedded in the lipid bilayer and involved in proton translocation. The protein is NADH-ubiquinone oxidoreductase chain 4L (MT-ND4L) of Chlorocebus sabaeus (Green monkey).